Consider the following 332-residue polypeptide: L-lactate dehydrogenase A chain (332 aa).

NAD(+) is bound by residues 29–57 and arginine 99; that span reads GAVG…VEDK. Positions 106, 138, and 169 each coordinate substrate. Asparagine 138 contacts NAD(+). Histidine 193 functions as the Proton acceptor in the catalytic mechanism. Threonine 248 provides a ligand contact to substrate.

Belongs to the LDH/MDH superfamily. LDH family. Homotetramer.

It localises to the cytoplasm. The enzyme catalyses (S)-lactate + NAD(+) = pyruvate + NADH + H(+). Its pathway is fermentation; pyruvate fermentation to lactate; (S)-lactate from pyruvate: step 1/1. Interconverts simultaneously and stereospecifically pyruvate and lactate with concomitant interconversion of NADH and NAD(+). The sequence is that of L-lactate dehydrogenase A chain (LDHA) from Caiman crocodilus apaporiensis (Rio Apaporis caiman).